The following is a 277-amino-acid chain: Formamidopyrimidine-DNA glycosylase (277 aa).

P2 functions as the Schiff-base intermediate with DNA in the catalytic mechanism. E3 functions as the Proton donor in the catalytic mechanism. Catalysis depends on K59, which acts as the Proton donor; for beta-elimination activity. Residues H96, R115, and R158 each coordinate DNA. The FPG-type zinc finger occupies 243–277; sequence WVYGRGGNPCRRCGGEILREKRAGRSTHFCPRCQK. The Proton donor; for delta-elimination activity role is filled by R267.

This sequence belongs to the FPG family. Monomer. Zn(2+) is required as a cofactor.

The enzyme catalyses Hydrolysis of DNA containing ring-opened 7-methylguanine residues, releasing 2,6-diamino-4-hydroxy-5-(N-methyl)formamidopyrimidine.. It carries out the reaction 2'-deoxyribonucleotide-(2'-deoxyribose 5'-phosphate)-2'-deoxyribonucleotide-DNA = a 3'-end 2'-deoxyribonucleotide-(2,3-dehydro-2,3-deoxyribose 5'-phosphate)-DNA + a 5'-end 5'-phospho-2'-deoxyribonucleoside-DNA + H(+). Involved in base excision repair of DNA damaged by oxidation or by mutagenic agents. Acts as a DNA glycosylase that recognizes and removes damaged bases. Has a preference for oxidized purines, such as 7,8-dihydro-8-oxoguanine (8-oxoG). Has AP (apurinic/apyrimidinic) lyase activity and introduces nicks in the DNA strand. Cleaves the DNA backbone by beta-delta elimination to generate a single-strand break at the site of the removed base with both 3'- and 5'-phosphates. This is Formamidopyrimidine-DNA glycosylase from Heliobacterium modesticaldum (strain ATCC 51547 / Ice1).